Consider the following 45-residue polypeptide: DNA-directed RNA polymerase subunit Rpo12 (45 aa).

Residues C8, C23, and C26 each contribute to the Zn(2+) site.

The protein belongs to the archaeal Rpo12/eukaryotic RPC10 RNA polymerase subunit family. Part of the RNA polymerase complex. Zn(2+) serves as cofactor.

It localises to the cytoplasm. It catalyses the reaction RNA(n) + a ribonucleoside 5'-triphosphate = RNA(n+1) + diphosphate. Functionally, DNA-dependent RNA polymerase (RNAP) catalyzes the transcription of DNA into RNA using the four ribonucleoside triphosphates as substrates. The protein is DNA-directed RNA polymerase subunit Rpo12 of Methanothrix thermoacetophila (strain DSM 6194 / JCM 14653 / NBRC 101360 / PT) (Methanosaeta thermophila).